The sequence spans 303 residues: Glycine--tRNA ligase alpha subunit (303 aa).

Belongs to the class-II aminoacyl-tRNA synthetase family. In terms of assembly, tetramer of two alpha and two beta subunits.

The protein localises to the cytoplasm. The catalysed reaction is tRNA(Gly) + glycine + ATP = glycyl-tRNA(Gly) + AMP + diphosphate. The chain is Glycine--tRNA ligase alpha subunit from Cronobacter sakazakii (strain ATCC BAA-894) (Enterobacter sakazakii).